The following is a 290-amino-acid chain: Cytochrome bo(3) ubiquinol oxidase subunit 2 (290 aa).

The N-terminal stretch at 1 to 24 (MISINFNNFFKTLLLILIAFTLHG) is a signal peptide. The N-palmitoyl cysteine moiety is linked to residue C25. The S-diacylglycerol cysteine moiety is linked to residue C25. At 25-42 (CDSILFNPHGIIAIQECS) the chain is on the extracellular side. Residues 43-63 (ILLISFLIMLFVIIPVIFMTI) form a helical membrane-spanning segment. At 64-87 (YFSVKYRASNINAKYKPDWCDSKK) the chain is on the cytoplasmic side. Residues 88–108 (IEIIVWTIPISIILFLAFVTW) form a helical membrane-spanning segment. Residues 109–290 (NYSHILDPKK…TYSKNKVFKH (182 aa)) lie on the Extracellular side of the membrane.

Belongs to the cytochrome c oxidase subunit 2 family. In terms of assembly, heterooctamer of two A chains, two B chains, two C chains and two D chains.

Its subcellular location is the cell membrane. Functionally, cytochrome bo(3) ubiquinol terminal oxidase is the component of the aerobic respiratory chain of E.coli that predominates when cells are grown at high aeration. Has proton pump activity across the membrane in addition to electron transfer, pumping 2 protons/electron. The sequence is that of Cytochrome bo(3) ubiquinol oxidase subunit 2 (cyoA) from Buchnera aphidicola subsp. Schizaphis graminum (strain Sg).